Here is a 174-residue protein sequence, read N- to C-terminus: Xanthine-guanine phosphoribosyltransferase (174 aa).

5-phospho-alpha-D-ribose 1-diphosphate is bound by residues 49–50 and 108–116; these read RG and DDLVDTGAT. Aspartate 109 lines the Mg(2+) pocket. Aspartate 112 and isoleucine 155 together coordinate guanine. Xanthine-binding residues include aspartate 112 and isoleucine 155. Residues 112–116 and 154–155 each bind GMP; these read DTGAT and WI.

The protein belongs to the purine/pyrimidine phosphoribosyltransferase family. XGPT subfamily. Homotetramer. It depends on Mg(2+) as a cofactor.

It localises to the cell inner membrane. The catalysed reaction is GMP + diphosphate = guanine + 5-phospho-alpha-D-ribose 1-diphosphate. It carries out the reaction XMP + diphosphate = xanthine + 5-phospho-alpha-D-ribose 1-diphosphate. The enzyme catalyses IMP + diphosphate = hypoxanthine + 5-phospho-alpha-D-ribose 1-diphosphate. The protein operates within purine metabolism; GMP biosynthesis via salvage pathway; GMP from guanine: step 1/1. It functions in the pathway purine metabolism; XMP biosynthesis via salvage pathway; XMP from xanthine: step 1/1. Functionally, purine salvage pathway enzyme that catalyzes the transfer of the ribosyl-5-phosphate group from 5-phospho-alpha-D-ribose 1-diphosphate (PRPP) to the N9 position of the 6-oxopurines guanine and xanthine to form the corresponding ribonucleotides GMP (guanosine 5'-monophosphate) and XMP (xanthosine 5'-monophosphate), with the release of PPi. To a lesser extent, also acts on hypoxanthine. This is Xanthine-guanine phosphoribosyltransferase from Rhodopseudomonas palustris (strain BisB18).